A 307-amino-acid polypeptide reads, in one-letter code: GTPase Era (307 aa).

Residues 13-180 (RCGFVALIGA…RRALAEMVPP (168 aa)) enclose the Era-type G domain. Positions 21–28 (GAPNVGKS) are G1. Residue 21 to 28 (GAPNVGKS) coordinates GTP. The interval 47–51 (QTTRA) is G2. The segment at 68–71 (DTPG) is G3. GTP-binding positions include 68-72 (DTPGI) and 130-133 (NKVD). Positions 130–133 (NKVD) are G4. A G5 region spans residues 159 to 161 (ISA). The region spanning 211-288 (LHQELPYQST…HLFLFVKVRE (78 aa)) is the KH type-2 domain.

Belongs to the TRAFAC class TrmE-Era-EngA-EngB-Septin-like GTPase superfamily. Era GTPase family. As to quaternary structure, monomer.

It is found in the cytoplasm. The protein resides in the cell inner membrane. Its function is as follows. An essential GTPase that binds both GDP and GTP, with rapid nucleotide exchange. Plays a role in 16S rRNA processing and 30S ribosomal subunit biogenesis and possibly also in cell cycle regulation and energy metabolism. The chain is GTPase Era from Bradyrhizobium sp. (strain ORS 278).